Here is a 474-residue protein sequence, read N- to C-terminus: Probable diacyglycerol O-acyltransferase Tgs4 (474 aa).

H135 (proton acceptor) is an active-site residue.

The protein belongs to the long-chain O-acyltransferase family.

It catalyses the reaction an acyl-CoA + a 1,2-diacyl-sn-glycerol = a triacyl-sn-glycerol + CoA. The protein operates within glycerolipid metabolism; triacylglycerol biosynthesis. Functionally, required for maintaining the appropriate mycolic acid composition and permeability of the envelope on its exposure to acidic pH. The protein is Probable diacyglycerol O-acyltransferase Tgs4 (tgs4) of Mycobacterium tuberculosis (strain CDC 1551 / Oshkosh).